The chain runs to 232 residues: Membrane steroid-binding protein 1 (232 aa).

Residues 25-45 (AAFFTAVAAAAALYHVVSGIF) form a helical membrane-spanning segment. Disordered regions lie at residues 48 to 77 (PPPP…VSEE) and 172 to 232 (TVPV…AKES). Residues 71–170 (LGEVSEEELR…GKYVKVGTVK (100 aa)) enclose the Cytochrome b5 heme-binding domain. The segment at 73 to 170 (EVSEEELRQY…GKYVKVGTVK (98 aa)) is steroid-binding. Low complexity predominate over residues 179–193 (APSTSPETTETAAAA). Positions 194 to 219 (EPEKAPATEEKPREVSSEEVKEKEDA) are enriched in basic and acidic residues.

This sequence belongs to the cytochrome b5 family. MAPR subfamily. In terms of assembly, interacts with SERL2. In terms of tissue distribution, expressed in leaf sheaths, leaf blades and panicles.

The protein localises to the cell membrane. In terms of biological role, binds multiple steroid compounds. May act as a coreceptor with SERL2 and enhance its endocytosis. In Oryza sativa subsp. japonica (Rice), this protein is Membrane steroid-binding protein 1.